A 156-amino-acid polypeptide reads, in one-letter code: Transcription inhibitor protein Gfh1 (156 aa).

A coiled-coil region spans residues 1-74 (MAREVKLTKA…LEDILSRAVI (74 aa)).

Belongs to the GreA/GreB family. As to quaternary structure, interacts with RNAP.

Functionally, inhibits all catalytic activities of RNA polymerase (RNAP) by partially occluding its substrate-binding site and preventing NTP binding. The protein is Transcription inhibitor protein Gfh1 (gfh1) of Thermus thermophilus (strain ATCC BAA-163 / DSM 7039 / HB27).